We begin with the raw amino-acid sequence, 505 residues long: Catalase (505 aa).

Residues His58 and Asn131 contribute to the active site. Tyr341 contacts heme.

This sequence belongs to the catalase family. Requires heme as cofactor.

The catalysed reaction is 2 H2O2 = O2 + 2 H2O. In terms of biological role, decomposes hydrogen peroxide into water and oxygen; serves to protect cells from the toxic effects of hydrogen peroxide. The sequence is that of Catalase (kat) from Methanosarcina barkeri (strain Fusaro / DSM 804).